A 274-amino-acid chain; its full sequence is Large ribosomal subunit protein uL2cz/uL2cy (274 aa).

Disordered stretches follow at residues 1 to 21 and 224 to 252; these read MAIH…VDSQ and NPVD…GYPA.

Belongs to the universal ribosomal protein uL2 family. Part of the 50S ribosomal subunit.

The protein resides in the plastid. It localises to the chloroplast. The polypeptide is Large ribosomal subunit protein uL2cz/uL2cy (rpl2-A) (Olimarabidopsis pumila (Dwarf rocket)).